Here is a 354-residue protein sequence, read N- to C-terminus: Alternative oxidase, mitochondrial (354 aa).

The transit peptide at 1-64 (MNSMSTTGPI…RFISSTPQSQ (64 aa)) directs the protein to the mitochondrion. Residues 153-173 (FVFLESVAGVPGMVGGMLRHL) traverse the membrane as a helical segment. Fe cation contacts are provided by Glu-157, Glu-196, and His-199. A helical membrane pass occupies residues 215 to 235 (LMVLGAQGVFFNGFFLSYLIS). 3 residues coordinate Fe cation: Glu-247, Glu-302, and His-305. Residues 333-354 (KPHPGKGIKHLKTTGWEREEVV) are disordered. Positions 335–344 (HPGKGIKHLK) are enriched in basic residues.

The protein belongs to the alternative oxidase family. The cofactor is Fe cation.

The protein resides in the mitochondrion inner membrane. Its function is as follows. Catalyzes cyanide-resistant oxygen consumption. May increase respiration when the cytochrome respiratory pathway is restricted, or in response to low temperatures. The protein is Alternative oxidase, mitochondrial (alxA) of Emericella nidulans (strain FGSC A4 / ATCC 38163 / CBS 112.46 / NRRL 194 / M139) (Aspergillus nidulans).